The chain runs to 96 residues: Pterin-4-alpha-carbinolamine dehydratase (96 aa).

It belongs to the pterin-4-alpha-carbinolamine dehydratase family.

The protein resides in the spore wall. The catalysed reaction is (4aS,6R)-4a-hydroxy-L-erythro-5,6,7,8-tetrahydrobiopterin = (6R)-L-erythro-6,7-dihydrobiopterin + H2O. In terms of biological role, has a role in spore wall formation. In Schizosaccharomyces pombe (strain 972 / ATCC 24843) (Fission yeast), this protein is Pterin-4-alpha-carbinolamine dehydratase (omt2).